The chain runs to 119 residues: MPRFDASGLITAIVTDARDGELLMVAHMNEEALRLTLETGIAHYWSRSRKTLWKKGETSGNLQSVVELRTDCDQDALWLKVHVAGDGPTCHTGRRSCFYRQVVSSGGKVALTMASDHDQ.

Aspartate 71 serves as a coordination point for Mg(2+). Cysteine 72 contacts Zn(2+). Positions 73 and 75 each coordinate Mg(2+). 2 residues coordinate Zn(2+): cysteine 90 and cysteine 97.

It belongs to the PRA-CH family. Homodimer. Requires Mg(2+) as cofactor. Zn(2+) serves as cofactor.

Its subcellular location is the cytoplasm. The enzyme catalyses 1-(5-phospho-beta-D-ribosyl)-5'-AMP + H2O = 1-(5-phospho-beta-D-ribosyl)-5-[(5-phospho-beta-D-ribosylamino)methylideneamino]imidazole-4-carboxamide. It functions in the pathway amino-acid biosynthesis; L-histidine biosynthesis; L-histidine from 5-phospho-alpha-D-ribose 1-diphosphate: step 3/9. Functionally, catalyzes the hydrolysis of the adenine ring of phosphoribosyl-AMP. This Brucella abortus (strain 2308) protein is Phosphoribosyl-AMP cyclohydrolase.